A 281-amino-acid polypeptide reads, in one-letter code: MKYTIIPFLLLVALTCATARSIDGSEKEVQEIREETPSSNEDVPFSLSANEDEEARGRLQAFLAKMKEIAAQTLGREESLSANEDEEARGRMQEFIKKLKAYLRKMKEKFSQISGREESFSANEDEEERGRLQAFLAKMKAIAAQTLGREESISANEDEETRGRLQAFLAKMKEIAAQTLGREESLSAIEDEEARGRLQAFLAKMKEIAAQTLGREESLSANEDEEARGRLQAFLAKTKEIAAQTLGREESLSANEDEEARGRLQAFLAKMKEIAAQTLGR.

The signal sequence occupies residues Met1 to Ala19. The propeptide occupies Arg20–Arg56. Leu74 is subject to Leucine amide. A propeptide spanning residues Gly75–Arg89 is cleaved from the precursor. Ser114 bears the Serine amide mark. Positions Gly115–Arg129 are excised as a propeptide. Leu147 is subject to Leucine amide. A propeptide spanning residues Gly148–Arg162 is cleaved from the precursor. Residue Leu180 is modified to Leucine amide. The propeptide occupies Gly181 to Arg195. Position 213 is a leucine amide (Leu213). The propeptide occupies Gly214–Arg228. Position 246 is a leucine amide (Leu246). The propeptide occupies Gly247 to Arg261. At Leu279 the chain carries Leucine amide.

In terms of tissue distribution, expressed by the venom gland.

The protein localises to the secreted. In terms of biological role, antimicrobial peptide that acts by influencing bacterial cell membrane permeability at low concentrations and by directly disrupting structure-function at high concentrations. Shows activity against Gram-negative bacteria (S.typhimurium CGMCC 1.1174 (MIC=2.5 uM), E.coli CCTCC AB 2018675 (MIC=5 uM), S.dysenteriae CGMCC 1.1869 (MIC=2.5 uM), P.aeruginosa CGMCC 1.596 (MIC 5-10 uM), K.pneumoniae (MIC=10 uM), A.baumannii (MIC=5-10 uM)), and Gram-positive bacteria (S.aureus CMCC 26003 or MRSA ATCC 43300 (MIC=5 uM), and E.faecium (MIC=2.5-5 uM)). Inhibits biofilm formation of E.coli and S.aureus in a dose-dependent manner and disrupts established biofilms. Demonstrates minimal bacterial resistance, excellent stability, negligible mammalian cell toxicity, low hemolytic activity, and appropriate selectivity for both normal and tumor cells. When combined with traditional antibiotics, exhibits additive or synergistic therapeutic effects. In vivo, in a neutropenic mouse thigh infection model, exhibits a therapeutic effect in inhibiting bacterial proliferation. The sequence is that of LC-AMP precursor 3 from Lycosa coelestis (Wolf spider).